The sequence spans 388 residues: Succinate--CoA ligase [ADP-forming] subunit beta (388 aa).

An ATP-grasp domain is found at 9-244 (KEILRQAGVP…LDEEDPAEVE (236 aa)). ATP contacts are provided by residues Lys46, 53 to 55 (GRG), Glu99, Ala102, and Glu107. Residues Asn199 and Asp213 each contribute to the Mg(2+) site. Substrate contacts are provided by residues Asn264 and 321–323 (GIM).

The protein belongs to the succinate/malate CoA ligase beta subunit family. Heterotetramer of two alpha and two beta subunits. It depends on Mg(2+) as a cofactor.

It catalyses the reaction succinate + ATP + CoA = succinyl-CoA + ADP + phosphate. It carries out the reaction GTP + succinate + CoA = succinyl-CoA + GDP + phosphate. The protein operates within carbohydrate metabolism; tricarboxylic acid cycle; succinate from succinyl-CoA (ligase route): step 1/1. In terms of biological role, succinyl-CoA synthetase functions in the citric acid cycle (TCA), coupling the hydrolysis of succinyl-CoA to the synthesis of either ATP or GTP and thus represents the only step of substrate-level phosphorylation in the TCA. The beta subunit provides nucleotide specificity of the enzyme and binds the substrate succinate, while the binding sites for coenzyme A and phosphate are found in the alpha subunit. The chain is Succinate--CoA ligase [ADP-forming] subunit beta from Albidiferax ferrireducens (strain ATCC BAA-621 / DSM 15236 / T118) (Rhodoferax ferrireducens).